The primary structure comprises 192 residues: Fe/S biogenesis protein NfuA (192 aa).

Cysteine 149 and cysteine 152 together coordinate [4Fe-4S] cluster.

This sequence belongs to the NfuA family. As to quaternary structure, homodimer. [4Fe-4S] cluster is required as a cofactor.

Involved in iron-sulfur cluster biogenesis. Binds a 4Fe-4S cluster, can transfer this cluster to apoproteins, and thereby intervenes in the maturation of Fe/S proteins. Could also act as a scaffold/chaperone for damaged Fe/S proteins. The polypeptide is Fe/S biogenesis protein NfuA (Shewanella denitrificans (strain OS217 / ATCC BAA-1090 / DSM 15013)).